The sequence spans 296 residues: Probable AP endonuclease (296 aa).

C16 and C20 are joined by a disulfide. H78, H115, E142, H182, H218, D231, H233, and E271 together coordinate Zn(2+).

The protein belongs to the AP endonuclease 2 family. Zn(2+) is required as a cofactor.

The protein resides in the host nucleus. Its subcellular location is the host cytoplasm. It localises to the virion. Functionally, endonuclease of the viral base excision repair system that catalyzes DNA cleavage reaction at the apurinic or apyrimidinic sites (AP sites). Cleaves phosphodiester bonds on the 5' side of AP sites. In addition to endonuclease activity, the AP endonuclease has a proofreading 3'-5' exonuclease activity that is considerably more efficient in the elimination of a mismatch than in that of a correctly paired base. Displays 3'-phosphatase and 3'-repair diesterase activities. The single nucleotide gaps generated by the AP endonuclease are filled by the viral repair DNA polymerase X and the DNA ligase. This chain is Probable AP endonuclease, found in Ornithodoros (relapsing fever ticks).